The following is a 125-amino-acid chain: Large ribosomal subunit protein bL12 (125 aa).

This sequence belongs to the bacterial ribosomal protein bL12 family. As to quaternary structure, homodimer. Part of the ribosomal stalk of the 50S ribosomal subunit. Forms a multimeric L10(L12)X complex, where L10 forms an elongated spine to which 2 to 4 L12 dimers bind in a sequential fashion. Binds GTP-bound translation factors.

Forms part of the ribosomal stalk which helps the ribosome interact with GTP-bound translation factors. Is thus essential for accurate translation. The protein is Large ribosomal subunit protein bL12 of Anaeromyxobacter dehalogenans (strain 2CP-1 / ATCC BAA-258).